We begin with the raw amino-acid sequence, 333 residues long: tRNA N6-adenosine threonylcarbamoyltransferase (333 aa).

Positions 111 and 115 each coordinate Fe cation. Residues 134–138 (VVSGG), D167, G180, D184, and N269 contribute to the substrate site. D297 contacts Fe cation.

This sequence belongs to the KAE1 / TsaD family. Requires Fe(2+) as cofactor.

The protein localises to the cytoplasm. The enzyme catalyses L-threonylcarbamoyladenylate + adenosine(37) in tRNA = N(6)-L-threonylcarbamoyladenosine(37) in tRNA + AMP + H(+). Functionally, required for the formation of a threonylcarbamoyl group on adenosine at position 37 (t(6)A37) in tRNAs that read codons beginning with adenine. Is involved in the transfer of the threonylcarbamoyl moiety of threonylcarbamoyl-AMP (TC-AMP) to the N6 group of A37, together with TsaE and TsaB. TsaD likely plays a direct catalytic role in this reaction. This is tRNA N6-adenosine threonylcarbamoyltransferase from Carboxydothermus hydrogenoformans (strain ATCC BAA-161 / DSM 6008 / Z-2901).